The primary structure comprises 208 residues: ATP phosphoribosyltransferase (208 aa).

This sequence belongs to the ATP phosphoribosyltransferase family. Short subfamily. In terms of assembly, heteromultimer composed of HisG and HisZ subunits.

The protein resides in the cytoplasm. The enzyme catalyses 1-(5-phospho-beta-D-ribosyl)-ATP + diphosphate = 5-phospho-alpha-D-ribose 1-diphosphate + ATP. It functions in the pathway amino-acid biosynthesis; L-histidine biosynthesis; L-histidine from 5-phospho-alpha-D-ribose 1-diphosphate: step 1/9. Functionally, catalyzes the condensation of ATP and 5-phosphoribose 1-diphosphate to form N'-(5'-phosphoribosyl)-ATP (PR-ATP). Has a crucial role in the pathway because the rate of histidine biosynthesis seems to be controlled primarily by regulation of HisG enzymatic activity. This chain is ATP phosphoribosyltransferase, found in Oceanobacillus iheyensis (strain DSM 14371 / CIP 107618 / JCM 11309 / KCTC 3954 / HTE831).